A 399-amino-acid chain; its full sequence is Argininosuccinate synthase (399 aa).

Residue 9–17 coordinates ATP; the sequence is AYSGGLDTS. Tyr-85 provides a ligand contact to L-citrulline. An ATP-binding site is contributed by Gly-115. Positions 117, 121, and 122 each coordinate L-aspartate. Asn-121 serves as a coordination point for L-citrulline. 4 residues coordinate L-citrulline: Arg-125, Ser-173, Glu-258, and Tyr-270.

Belongs to the argininosuccinate synthase family. Type 1 subfamily. As to quaternary structure, homotetramer.

The protein localises to the cytoplasm. The enzyme catalyses L-citrulline + L-aspartate + ATP = 2-(N(omega)-L-arginino)succinate + AMP + diphosphate + H(+). It participates in amino-acid biosynthesis; L-arginine biosynthesis; L-arginine from L-ornithine and carbamoyl phosphate: step 2/3. The protein is Argininosuccinate synthase of Streptococcus gordonii (strain Challis / ATCC 35105 / BCRC 15272 / CH1 / DL1 / V288).